A 651-amino-acid chain; its full sequence is Endoplasmic reticulum chaperone BiP (651 aa).

The signal sequence occupies residues 1–20 (MGLSTYVGIFLLCILTLSRC). Residues 36-39 (GTTY), Lys96, 226-228 (GGT), 292-299 (EKAKRTLS), and 363-366 (GSTR) each bind ATP. Residues 125–279 (KPYMKVQVGS…KKKEGKDITK (155 aa)) are nucleotide-binding (NBD). A substrate-binding (SBD) region spans residues 399–499 (VQAGVISGVE…PRGLPQIEVT (101 aa)). The Prevents secretion from ER motif lies at 648–651 (KEEL).

This sequence belongs to the heat shock protein 70 family.

The protein resides in the endoplasmic reticulum lumen. The enzyme catalyses ATP + H2O = ADP + phosphate + H(+). Its activity is regulated as follows. The chaperone activity is regulated by ATP-induced allosteric coupling of the nucleotide-binding (NBD) and substrate-binding (SBD) domains. In the ADP-bound and nucleotide-free (apo) states, the two domains have little interaction. In contrast, in the ATP-bound state the two domains are tightly coupled, which results in drastically accelerated kinetics in both binding and release of polypeptide substrates. J domain-containing co-chaperones stimulate the ATPase activity and are required for efficient substrate recognition. In terms of biological role, endoplasmic reticulum chaperone that plays a key role in protein folding and quality control in the endoplasmic reticulum lumen. Involved in the correct folding of proteins and degradation of misfolded proteins. Acts as a key repressor of the unfolded protein response (UPR). In Echinococcus granulosus (Hydatid tapeworm), this protein is Endoplasmic reticulum chaperone BiP.